Here is a 573-residue protein sequence, read N- to C-terminus: 60 kDa heat shock protein, mitochondrial (573 aa).

The transit peptide at 1-26 (MLRLPTVLRQMRPVSRALAPHLTRAY) directs the protein to the mitochondrion. The residue at position 31 (lysine 31) is an N6-succinyllysine. 2 positions are modified to phosphoserine: serine 67 and serine 70. Lysine 75 lines the ATP pocket. Lysine 75 is modified (N6-acetyllysine). N6-acetyllysine; alternate is present on lysine 82. An N6-succinyllysine; alternate modification is found at lysine 82. Lysine 87 bears the N6-acetyllysine mark. Residue tyrosine 90 is modified to Phosphotyrosine. Lysine 91 carries the post-translational modification N6-acetyllysine. 111-115 (DGTTT) lines the ATP pocket. Lysine 125 carries the post-translational modification N6-acetyllysine; alternate. Lysine 125 is modified (N6-succinyllysine; alternate). Lysine 130 is modified (N6-acetyllysine). Lysine 133 carries the post-translational modification N6-acetyllysine; alternate. Lysine 133 bears the N6-succinyllysine; alternate mark. Lysine 133 carries the post-translational modification N6-malonyllysine; alternate. Lysine 156 is modified (N6-acetyllysine). Residues lysine 191, lysine 202, lysine 205, lysine 218, and lysine 236 each carry the N6-acetyllysine; alternate modification. An N6-succinyllysine; alternate mark is found at lysine 191, lysine 202, lysine 205, lysine 218, and lysine 236. Lysine 249 bears the N6-acetyllysine mark. Lysine 250 bears the N6-acetyllysine; alternate mark. An N6-succinyllysine; alternate modification is found at lysine 250. Lysine 269 and lysine 292 each carry N6-acetyllysine. N6-succinyllysine is present on lysine 301. The residue at position 314 (lysine 314) is an N6-acetyllysine. The residue at position 352 (lysine 352) is an N6-acetyllysine; alternate. Lysine 352 is subject to N6-succinyllysine; alternate. Residues lysine 359 and lysine 389 each carry the N6-acetyllysine modification. Lysine 396 carries the post-translational modification N6-acetyllysine; alternate. At lysine 396 the chain carries N6-succinyllysine; alternate. Serine 410 is subject to Phosphoserine. An ATP-binding site is contributed by glycine 440. Position 455 is an N6-acetyllysine; alternate (lysine 455). Lysine 455 is modified (N6-succinyllysine; alternate). Lysine 469 is subject to N6-acetyllysine. Lysine 481 is subject to N6-acetyllysine; alternate. Lysine 481 is modified (N6-succinyllysine; alternate). Position 488 is a phosphoserine (serine 488). Aspartate 520 serves as a coordination point for ATP. Residue lysine 551 forms a Glycyl lysine isopeptide (Lys-Gly) (interchain with G-Cter in SUMO2) linkage.

The protein belongs to the chaperonin (HSP60) family. As to quaternary structure, homoheptamer arranged in a ring structure. The functional units of these chaperonins consist of heptameric rings of the large subunit Hsp60, which function as a back-to-back double ring. Interacts with 2 heptameric Hsp10 rings to form the symmetrical football complex. Interacts with HRAS. Interacts with ATAD3A. Interacts with ETFBKMT and EEF1AKMT3. Interacts with MFHAS1.

It localises to the mitochondrion matrix. It catalyses the reaction ATP + H2O + a folded polypeptide = ADP + phosphate + an unfolded polypeptide.. In terms of biological role, chaperonin implicated in mitochondrial protein import and macromolecular assembly. Together with Hsp10, facilitates the correct folding of imported proteins. May also prevent misfolding and promote the refolding and proper assembly of unfolded polypeptides generated under stress conditions in the mitochondrial matrix. The functional units of these chaperonins consist of heptameric rings of the large subunit Hsp60, which function as a back-to-back double ring. In a cyclic reaction, Hsp60 ring complexes bind one unfolded substrate protein per ring, followed by the binding of ATP and association with 2 heptameric rings of the co-chaperonin Hsp10. This leads to sequestration of the substrate protein in the inner cavity of Hsp60 where, for a certain period of time, it can fold undisturbed by other cell components. Synchronous hydrolysis of ATP in all Hsp60 subunits results in the dissociation of the chaperonin rings and the release of ADP and the folded substrate protein. In Rattus norvegicus (Rat), this protein is 60 kDa heat shock protein, mitochondrial (Hspd1).